The following is a 436-amino-acid chain: 3-ketoacyl-CoA thiolase (436 aa).

The active-site Acyl-thioester intermediate is the Cys-99. Catalysis depends on proton acceptor residues His-392 and Cys-422.

It belongs to the thiolase-like superfamily. Thiolase family. Heterotetramer of two alpha chains (FadJ) and two beta chains (FadI).

Its subcellular location is the cytoplasm. It catalyses the reaction an acyl-CoA + acetyl-CoA = a 3-oxoacyl-CoA + CoA. The protein operates within lipid metabolism; fatty acid beta-oxidation. Catalyzes the final step of fatty acid oxidation in which acetyl-CoA is released and the CoA ester of a fatty acid two carbons shorter is formed. The chain is 3-ketoacyl-CoA thiolase from Salmonella paratyphi A (strain ATCC 9150 / SARB42).